A 280-amino-acid chain; its full sequence is Acetyl-coenzyme A carboxylase carboxyl transferase subunit beta (280 aa).

Positions 28–280 constitute a CoA carboxyltransferase N-terminal domain; it reads LFLACPYCGA…IVRLHTAEAE (253 aa). Residues cysteine 32, cysteine 35, cysteine 50, and cysteine 53 each coordinate Zn(2+). The C4-type zinc-finger motif lies at 32–53; the sequence is CPYCGAQMYNKQLGKYRVCAKC.

It belongs to the AccD/PCCB family. In terms of assembly, acetyl-CoA carboxylase is a heterohexamer composed of biotin carboxyl carrier protein (AccB), biotin carboxylase (AccC) and two subunits each of ACCase subunit alpha (AccA) and ACCase subunit beta (AccD). The cofactor is Zn(2+).

Its subcellular location is the cytoplasm. The enzyme catalyses N(6)-carboxybiotinyl-L-lysyl-[protein] + acetyl-CoA = N(6)-biotinyl-L-lysyl-[protein] + malonyl-CoA. It participates in lipid metabolism; malonyl-CoA biosynthesis; malonyl-CoA from acetyl-CoA: step 1/1. Functionally, component of the acetyl coenzyme A carboxylase (ACC) complex. Biotin carboxylase (BC) catalyzes the carboxylation of biotin on its carrier protein (BCCP) and then the CO(2) group is transferred by the transcarboxylase to acetyl-CoA to form malonyl-CoA. The chain is Acetyl-coenzyme A carboxylase carboxyl transferase subunit beta from Leuconostoc mesenteroides subsp. mesenteroides (strain ATCC 8293 / DSM 20343 / BCRC 11652 / CCM 1803 / JCM 6124 / NCDO 523 / NBRC 100496 / NCIMB 8023 / NCTC 12954 / NRRL B-1118 / 37Y).